Reading from the N-terminus, the 354-residue chain is uncharacterized protein (354 aa).

The protein belongs to the band 7/mec-2 family.

It is found in the mitochondrion. This is an uncharacterized protein from Schizosaccharomyces pombe (strain 972 / ATCC 24843) (Fission yeast).